Here is a 354-residue protein sequence, read N- to C-terminus: Protein RecA (354 aa).

67–74 (GPESSGKT) contacts ATP. The disordered stretch occupies residues 331–354 (GGANSSDSKTESDENIDLETGEVF). Acidic residues predominate over residues 343 to 354 (DENIDLETGEVF).

Belongs to the RecA family.

It localises to the cytoplasm. In terms of biological role, can catalyze the hydrolysis of ATP in the presence of single-stranded DNA, the ATP-dependent uptake of single-stranded DNA by duplex DNA, and the ATP-dependent hybridization of homologous single-stranded DNAs. It interacts with LexA causing its activation and leading to its autocatalytic cleavage. This chain is Protein RecA, found in Shewanella frigidimarina (strain NCIMB 400).